A 535-amino-acid polypeptide reads, in one-letter code: GMP synthase [glutamine-hydrolyzing] (535 aa).

The Glutamine amidotransferase type-1 domain occupies 4 to 210; sequence KILILDFGSQ…VHEICHCKPD (207 aa). Residue Cys85 is the Nucleophile of the active site. Catalysis depends on residues His184 and Glu186. The GMPS ATP-PPase domain occupies 211–403; that stretch reads WVMGDYIAEA…LGLPREMVYR (193 aa). Residue 238-244 coordinates ATP; the sequence is SGGVDSS.

Homodimer.

It carries out the reaction XMP + L-glutamine + ATP + H2O = GMP + L-glutamate + AMP + diphosphate + 2 H(+). Its pathway is purine metabolism; GMP biosynthesis; GMP from XMP (L-Gln route): step 1/1. Its function is as follows. Catalyzes the synthesis of GMP from XMP. The sequence is that of GMP synthase [glutamine-hydrolyzing] from Polynucleobacter asymbioticus (strain DSM 18221 / CIP 109841 / QLW-P1DMWA-1) (Polynucleobacter necessarius subsp. asymbioticus).